We begin with the raw amino-acid sequence, 319 residues long: Malate dehydrogenase (319 aa).

Residues 10–15 and Asp-34 each bind NAD(+); that span reads GAGNIG. Positions 83 and 89 each coordinate substrate. NAD(+) is bound by residues Asn-96 and 119–121; that span reads ITN. The substrate site is built by Asn-121 and Arg-152. His-176 (proton acceptor) is an active-site residue.

Belongs to the LDH/MDH superfamily. MDH type 3 family.

The enzyme catalyses (S)-malate + NAD(+) = oxaloacetate + NADH + H(+). Catalyzes the reversible oxidation of malate to oxaloacetate. The protein is Malate dehydrogenase of Francisella novicida.